Consider the following 115-residue polypeptide: Parathyroid hormone (115 aa).

An N-terminal signal peptide occupies residues Met-1–Gly-25. The propeptide occupies Lys-26–Arg-31. The interval Arg-51–Gly-69 is important for receptor binding. The interval Ala-73–Gln-115 is disordered. Over residues Lys-84–Asp-105 the composition is skewed to basic and acidic residues.

Belongs to the parathyroid hormone family. As to quaternary structure, interacts with PTH1R (via N-terminal extracellular domain).

It is found in the secreted. Parathyroid hormone elevates calcium level by dissolving the salts in bone and preventing their renal excretion. Acts by binding to its receptor, PTH1R, activating G protein-coupled receptor signaling. Stimulates [1-14C]-2-deoxy-D-glucose (2DG) transport and glycogen synthesis in osteoblastic cells. This is Parathyroid hormone from Homo sapiens (Human).